We begin with the raw amino-acid sequence, 464 residues long: Fumarate hydratase class II (464 aa).

Substrate contacts are provided by residues 98 to 100 (SGT), 129 to 132 (HPND), 139 to 141 (SSN), and threonine 187. The Proton donor/acceptor role is filled by histidine 188. Serine 318 is an active-site residue. Residues serine 319 and 324–326 (KVN) each bind substrate.

Belongs to the class-II fumarase/aspartase family. Fumarase subfamily. Homotetramer.

Its subcellular location is the cytoplasm. The enzyme catalyses (S)-malate = fumarate + H2O. It participates in carbohydrate metabolism; tricarboxylic acid cycle; (S)-malate from fumarate: step 1/1. Involved in the TCA cycle. Catalyzes the stereospecific interconversion of fumarate to L-malate. The polypeptide is Fumarate hydratase class II (Haemophilus influenzae (strain ATCC 51907 / DSM 11121 / KW20 / Rd)).